Here is a 194-residue protein sequence, read N- to C-terminus: Holliday junction branch migration complex subunit RuvA (194 aa).

The domain I stretch occupies residues 1-64 (MISSLNGILE…EDALSLFGFA (64 aa)). The tract at residues 65 to 143 (TTEELSLFET…KNWEAGVLSQ (79 aa)) is domain II. The flexible linker stretch occupies residues 144 to 149 (VTEANS). The interval 149 to 194 (SDILATLTALGYSSSEAAKAISSLGDNGDLPLEERIKLALNYFNNK) is domain III.

This sequence belongs to the RuvA family. As to quaternary structure, homotetramer. Forms an RuvA(8)-RuvB(12)-Holliday junction (HJ) complex. HJ DNA is sandwiched between 2 RuvA tetramers; dsDNA enters through RuvA and exits via RuvB. An RuvB hexamer assembles on each DNA strand where it exits the tetramer. Each RuvB hexamer is contacted by two RuvA subunits (via domain III) on 2 adjacent RuvB subunits; this complex drives branch migration. In the full resolvosome a probable DNA-RuvA(4)-RuvB(12)-RuvC(2) complex forms which resolves the HJ.

It is found in the cytoplasm. In terms of biological role, the RuvA-RuvB-RuvC complex processes Holliday junction (HJ) DNA during genetic recombination and DNA repair, while the RuvA-RuvB complex plays an important role in the rescue of blocked DNA replication forks via replication fork reversal (RFR). RuvA specifically binds to HJ cruciform DNA, conferring on it an open structure. The RuvB hexamer acts as an ATP-dependent pump, pulling dsDNA into and through the RuvAB complex. HJ branch migration allows RuvC to scan DNA until it finds its consensus sequence, where it cleaves and resolves the cruciform DNA. This is Holliday junction branch migration complex subunit RuvA from Dehalococcoides mccartyi (strain CBDB1).